The chain runs to 490 residues: Nuclear transcription factor Y subunit beta (490 aa).

Residues 1–48 (MSGNEDFIYDDNSSSSISNQTDGGGGGGSSNNNSGGNANNNNNEGDRE) are disordered. Over residues 30–43 (SNNNSGGNANNNNN) the composition is skewed to low complexity. A DNA-binding region spans residues 53–59 (LPIANII). Residues 80–91 (VQDCVSEFISFI) are subunit association domain (SAD). Disordered stretches follow at residues 139 to 195 (EKNS…QQQQ) and 221 to 264 (QQQQ…NQQY). Residues 181–195 (QQQQQPPQVQQQQQQ) are compositionally biased toward low complexity. Residues 188 to 219 (QVQQQQQQQQQQQQQQLQQQQQLQQHQQQQLQ) are a coiled coil. Positions 269 to 307 (QQQQQQQQQQQQQQQQQQQQQQQQQQQQQQQQQQQQQVQ) form a coiled coil. 2 disordered regions span residues 325-370 (NQQA…QHLQ) and 399-490 (QFSN…PSTS). A compositionally biased stretch (low complexity) spans 399-468 (QFSNNNNNNN…GNSLHNSGNS (70 aa)). Residues 478–490 (PYISTNPEYPSTS) show a composition bias toward polar residues.

The protein belongs to the NFYB/HAP3 subunit family. In terms of assembly, heterotrimeric transcription factor composed of three components, nfyA, nfyB and nfyC. nfyB and nfyC must interact and dimerize for nfyA association and DNA binding.

It is found in the nucleus. In terms of biological role, component of the NF-Y/HAP transcription factor complex. The NF-Y complex stimulates the transcription of various genes by recognizing and binding to a CCAAT motif in promoters. In Dictyostelium discoideum (Social amoeba), this protein is Nuclear transcription factor Y subunit beta (nfyB).